The chain runs to 202 residues: Proteasome subunit beta 1 (202 aa).

Residue M1 is a propeptide, removed in mature form; by autocatalysis. Residue T2 is the Nucleophile of the active site.

It belongs to the peptidase T1B family. As to quaternary structure, the 20S proteasome core is composed of 14 alpha and 14 beta subunits that assemble into four stacked heptameric rings, resulting in a barrel-shaped structure. The two inner rings, each composed of seven catalytic beta subunits, are sandwiched by two outer rings, each composed of seven alpha subunits. The catalytic chamber with the active sites is on the inside of the barrel. Has a gated structure, the ends of the cylinder being occluded by the N-termini of the alpha-subunits. Is capped at one or both ends by the proteasome regulatory ATPase, PAN.

It localises to the cytoplasm. It catalyses the reaction Cleavage of peptide bonds with very broad specificity.. Its activity is regulated as follows. The formation of the proteasomal ATPase PAN-20S proteasome complex, via the docking of the C-termini of PAN into the intersubunit pockets in the alpha-rings, triggers opening of the gate for substrate entry. Interconversion between the open-gate and close-gate conformations leads to a dynamic regulation of the 20S proteasome proteolysis activity. Component of the proteasome core, a large protease complex with broad specificity involved in protein degradation. The protein is Proteasome subunit beta 1 of Pyrobaculum arsenaticum (strain DSM 13514 / JCM 11321 / PZ6).